The sequence spans 248 residues: DNA repair protein RecO (248 aa).

It belongs to the RecO family.

In terms of biological role, involved in DNA repair and RecF pathway recombination. The protein is DNA repair protein RecO of Bradyrhizobium sp. (strain BTAi1 / ATCC BAA-1182).